The primary structure comprises 159 residues: uncharacterized protein (159 aa).

A signal peptide spans 1 to 20; sequence MKKIIAMSLLMFSVVMSVNA.

This is an uncharacterized protein from Pasteurella multocida (strain Pm70).